The following is a 3394-amino-acid chain: Protein PFC0760c (3394 aa).

Low complexity-rich tracts occupy residues 471–508 (NNND…NYNN), 515–528 (NMNS…NNLH), and 786–841 (NNQN…NQNN). 8 disordered regions span residues 471–539 (NNND…DENN), 779–844 (MSSN…NAGI), 1038–1099 (NKKK…NNDD), 1892–1918 (TTTT…NNND), 2648–2693 (KMDL…DNHL), 2835–2909 (AKNE…NSNN), 3000–3057 (VSVG…DVNT), and 3107–3394 (DYVN…NSEE). The segment covering 1038–1097 (NKKKNNDGDNKSQEDDDGNKKKNNDGDNKSQEDDDGNKKKNNDGDNKSQEDDYGNKKKNN) has biased composition (basic and acidic residues). Acidic residues predominate over residues 2657–2671 (GDDDDDDDDDDDDDN). Residues 2672-2686 (NNNNNNNNNNNNNNM) are compositionally biased toward low complexity. The segment covering 2836–2846 (KNENYPVSTHY) has biased composition (polar residues). 2 stretches are compositionally biased toward low complexity: residues 2855 to 2865 (DNINNDNNNDN) and 2872 to 2909 (NDNI…NSNN). Acidic residues-rich tracts occupy residues 3007–3047 (DNND…EEKE) and 3147–3257 (DDDE…DDND). A compositionally biased stretch (basic and acidic residues) spans 3258-3292 (NDHNDDNNDEEKYSCHDDKNEHTNNDLLNIDHDNN). The span at 3300–3309 (LYSTYNVSVS) shows a compositional bias: polar residues. Basic and acidic residues predominate over residues 3310–3320 (HNKDPSNKENE). Residues 3321–3330 (IQNLISIDSS) are compositionally biased toward polar residues. Residues 3331 to 3379 (NENDENDENDENDENDENDENDENDENDENDENDEKDENDENDENDENF) are compositionally biased toward acidic residues. Residues 3385–3394 (GTLNEMNSEE) show a composition bias toward polar residues.

The protein is Protein PFC0760c of Plasmodium falciparum (isolate 3D7).